Consider the following 371-residue polypeptide: 2-aminoethylphosphonate--pyruvate transaminase (371 aa).

An N6-(pyridoxal phosphate)lysine modification is found at K195.

The protein belongs to the class-V pyridoxal-phosphate-dependent aminotransferase family. PhnW subfamily. In terms of assembly, homodimer. Pyridoxal 5'-phosphate serves as cofactor.

The catalysed reaction is (2-aminoethyl)phosphonate + pyruvate = phosphonoacetaldehyde + L-alanine. Involved in phosphonate degradation. The chain is 2-aminoethylphosphonate--pyruvate transaminase from Pseudomonas aeruginosa (strain UCBPP-PA14).